The sequence spans 345 residues: NADH-ubiquinone oxidoreductase chain 2 (345 aa).

9 helical membrane-spanning segments follow: residues 1-21, 25-45, 60-80, 113-133, 148-168, 191-211, 239-259, 274-294, and 324-344; these read MNPIINFILLFSMMAGTILAM, HWVYAWLGLELNTLAIIPIIS, FLIQAISSALFLLSGITNAYL, FWLPEVLQGVPILTALIIATW, LIPTPITLTMGLLSTIIGGLG, VIIITIAPNLTLLNLTLYMIF, IITSLFLLSLLSLGGLPPMSG, HLTPLALSMALMALLSLMFYL, and SSLSMLTPPSLLILPIMPLLI.

Belongs to the complex I subunit 2 family.

It is found in the mitochondrion inner membrane. It carries out the reaction a ubiquinone + NADH + 5 H(+)(in) = a ubiquinol + NAD(+) + 4 H(+)(out). In terms of biological role, core subunit of the mitochondrial membrane respiratory chain NADH dehydrogenase (Complex I) that is believed to belong to the minimal assembly required for catalysis. Complex I functions in the transfer of electrons from NADH to the respiratory chain. The immediate electron acceptor for the enzyme is believed to be ubiquinone. This Varanus baritji (Black-spotted ridge-tailed monitor) protein is NADH-ubiquinone oxidoreductase chain 2 (MT-ND2).